We begin with the raw amino-acid sequence, 215 residues long: Pyridoxine/pyridoxamine 5'-phosphate oxidase (215 aa).

Substrate-binding positions include 9 to 12 (RRDY) and K69. FMN contacts are provided by residues 64–69 (RVLLLK), 79–80 (FT), K86, and Q108. Substrate contacts are provided by Y126, R130, and S134. FMN contacts are provided by residues 143-144 (QS) and W188. 194 to 196 (RLH) lines the substrate pocket. R198 is a binding site for FMN.

Belongs to the pyridoxamine 5'-phosphate oxidase family. Homodimer. The cofactor is FMN.

It carries out the reaction pyridoxamine 5'-phosphate + O2 + H2O = pyridoxal 5'-phosphate + H2O2 + NH4(+). The catalysed reaction is pyridoxine 5'-phosphate + O2 = pyridoxal 5'-phosphate + H2O2. It participates in cofactor metabolism; pyridoxal 5'-phosphate salvage; pyridoxal 5'-phosphate from pyridoxamine 5'-phosphate: step 1/1. It functions in the pathway cofactor metabolism; pyridoxal 5'-phosphate salvage; pyridoxal 5'-phosphate from pyridoxine 5'-phosphate: step 1/1. In terms of biological role, catalyzes the oxidation of either pyridoxine 5'-phosphate (PNP) or pyridoxamine 5'-phosphate (PMP) into pyridoxal 5'-phosphate (PLP). The chain is Pyridoxine/pyridoxamine 5'-phosphate oxidase from Pseudomonas syringae pv. tomato (strain ATCC BAA-871 / DC3000).